Consider the following 226-residue polypeptide: 7-cyano-7-deazaguanine synthase (226 aa).

ATP is bound at residue 10–20 (LSGGLDSATAA). 4 residues coordinate Zn(2+): Cys191, Cys199, Cys202, and Cys205.

The protein belongs to the QueC family. It depends on Zn(2+) as a cofactor.

It catalyses the reaction 7-carboxy-7-deazaguanine + NH4(+) + ATP = 7-cyano-7-deazaguanine + ADP + phosphate + H2O + H(+). Its pathway is purine metabolism; 7-cyano-7-deazaguanine biosynthesis. Catalyzes the ATP-dependent conversion of 7-carboxy-7-deazaguanine (CDG) to 7-cyano-7-deazaguanine (preQ(0)). The sequence is that of 7-cyano-7-deazaguanine synthase from Synechococcus sp. (strain CC9605).